A 326-amino-acid chain; its full sequence is Phenylalanine--tRNA ligase alpha subunit (326 aa).

Position 251 (Glu251) interacts with Mg(2+).

It belongs to the class-II aminoacyl-tRNA synthetase family. Phe-tRNA synthetase alpha subunit type 1 subfamily. Tetramer of two alpha and two beta subunits. Mg(2+) is required as a cofactor.

Its subcellular location is the cytoplasm. The catalysed reaction is tRNA(Phe) + L-phenylalanine + ATP = L-phenylalanyl-tRNA(Phe) + AMP + diphosphate + H(+). The sequence is that of Phenylalanine--tRNA ligase alpha subunit from Pseudoalteromonas atlantica (strain T6c / ATCC BAA-1087).